Here is a 319-residue protein sequence, read N- to C-terminus: Ribosomal RNA small subunit methyltransferase H (319 aa).

Residues 39 to 41 (GGH), aspartate 59, phenylalanine 83, aspartate 104, and glutamine 111 each bind S-adenosyl-L-methionine.

The protein belongs to the methyltransferase superfamily. RsmH family.

The protein localises to the cytoplasm. It catalyses the reaction cytidine(1402) in 16S rRNA + S-adenosyl-L-methionine = N(4)-methylcytidine(1402) in 16S rRNA + S-adenosyl-L-homocysteine + H(+). Specifically methylates the N4 position of cytidine in position 1402 (C1402) of 16S rRNA. This is Ribosomal RNA small subunit methyltransferase H from Ralstonia pickettii (strain 12D).